We begin with the raw amino-acid sequence, 410 residues long: MAAEIHSRPQSSRPVLLSKIEGHQDAVTAALLIPKEDGVITASEDRTIRVWLKRDSGQYWPSIYHTMASPCSAMAYHHDSRRIFVGQDNGAVMEFHVSEDFNKMNFIKTYPAHQNRVSAIIFSLATEWVISTGHDKCVSWMCTRSGNMLGRHFFTSWASCLQYDFDTQYAFVGDYSGQITLLKLEQNTCSVITTLKGHEGSVACLWWDPIQRLLFSGASDNSIIMWDIGGRKGRTLLLQGHHDKVQSLCYLQLTRQLVSCSSDGGIAVWNMDVSREEAPQWLESDSCQKCEQPFFWNIKQMWDTKTLGLRQHHCRKCGQAVCGKCSSKRSSYPVMGFEFQVRVCDSCYDSIKDEDRTSLATFHEGKHNISHMSMDIARGLMVTCGTDRIVKIWDMTPVVGCSLATGFSPH.

WD repeat units follow at residues Gly22–Pro61, Thr66–Asn105, Ala112–Gly150, Phe153–Ile192, Gly197–Leu236, and Gly240–Pro279. The FYVE-type zinc finger occupies Trp281–Lys352. Zn(2+) contacts are provided by Cys287, Cys290, Cys314, Cys317, Cys322, Cys325, Cys344, and Cys347. The stretch at Glu364–Leu403 is one WD 7 repeat. Ser408 carries the phosphoserine modification.

As to quaternary structure, binds PtdIns3P in vitro with high specificity over other phosphoinositides. Interacts (via WD repeat 2) with tyrosine-phosphorylated TLR3 (via TIR domain) in response to poly(I:C). Interacts with TICAM1 in response to poly(I:C). Interacts with TLR4 in response to LPS.

It is found in the early endosome. Its function is as follows. Positively regulates TLR3- and TLR4-mediated signaling pathways by bridging the interaction between TLR3 or TLR4 and TICAM1. Promotes TLR3/4 ligand-induced activation of transcription factors IRF3 and NF-kappa-B, as well as the production of IFN-beta and inflammatory cytokines. The polypeptide is WD repeat and FYVE domain-containing protein 1 (WDFY1) (Homo sapiens (Human)).